The primary structure comprises 480 residues: Na(+)/H(+) antiporter NhaA (480 aa).

The next 11 membrane-spanning stretches (helical) occupy residues 34–54 (VGGVLLLVATVTALVWANIPA), 76–96 (LSVAHWAADGLLAVFFFVAGI), 113–133 (AVLPVVAALCGMAVPALVYTL), 144–164 (GWAVPTATDIAFALAVLAVIG), 174–194 (FLLTLAVVDDLFAILIIAIFF), 197–217 (RINFAALGGAVAGLAVFWLLL), 223–243 (GWYVYVPLAVVVWALMYNSGV), 282–302 (GLAVPLFALFSAGVVVSGGAL), 312–332 (LGVVLGLVVGKTLGIFGSTWL), 350–370 (IFAVASLAGIGFTVSLLIGEL), and 381–401 (EVKAAVLTGSLIAALCATVLL). The tract at residues 454-480 (AAEKAAAARHGGAEVPGGAGEEDGRPA) is disordered.

It belongs to the NhaA Na(+)/H(+) (TC 2.A.33) antiporter family.

It localises to the cell membrane. The catalysed reaction is Na(+)(in) + 2 H(+)(out) = Na(+)(out) + 2 H(+)(in). In terms of biological role, na(+)/H(+) antiporter that extrudes sodium in exchange for external protons. This Streptomyces antibioticus protein is Na(+)/H(+) antiporter NhaA.